Consider the following 494-residue polypeptide: Glycerol kinase (494 aa).

Threonine 12 serves as a coordination point for ADP. Residues threonine 12, threonine 13, and serine 14 each contribute to the ATP site. Position 12 (threonine 12) interacts with sn-glycerol 3-phosphate. Arginine 16 is a binding site for ADP. Sn-glycerol 3-phosphate contacts are provided by arginine 82, glutamate 83, tyrosine 134, and aspartate 243. 5 residues coordinate glycerol: arginine 82, glutamate 83, tyrosine 134, aspartate 243, and glutamine 244. ADP is bound by residues threonine 265 and glycine 308. 4 residues coordinate ATP: threonine 265, glycine 308, glutamine 312, and glycine 408. ADP is bound by residues glycine 408 and asparagine 412.

The protein belongs to the FGGY kinase family.

The enzyme catalyses glycerol + ATP = sn-glycerol 3-phosphate + ADP + H(+). It participates in polyol metabolism; glycerol degradation via glycerol kinase pathway; sn-glycerol 3-phosphate from glycerol: step 1/1. Inhibited by fructose 1,6-bisphosphate (FBP). In terms of biological role, key enzyme in the regulation of glycerol uptake and metabolism. Catalyzes the phosphorylation of glycerol to yield sn-glycerol 3-phosphate. The protein is Glycerol kinase of Marinomonas sp. (strain MWYL1).